Consider the following 333-residue polypeptide: Extracellular globin (333 aa).

Positions 1–18 (MHSSIVLAIVLFVAIASA) are cleaved as a signal peptide. 2 Globin domains span residues 25-167 (CMKS…HHGR) and 174-318 (CMNS…KHAK). Residues glutamine 82 and histidine 114 each coordinate heme b. Asparagine 216 carries N-linked (GlcNAc...) asparagine glycosylation. Heme b-binding residues include glutamine 231 and histidine 263. A disordered region spans residues 314–333 (DKHAKAEKDHHEGEHKEEHH).

It belongs to the globin family. In terms of assembly, homooctamer.

The protein resides in the secreted. It is found in the extracellular space. The polypeptide is Extracellular globin (Pseudoterranova decipiens (Sealworm)).